The chain runs to 552 residues: MTNTQQQSESIDDNQAQLSKQQNSDNNKKVPRVLMILDGFGHREDDKDNAIAAADMPNLDKIYEQYPHGLISASGEDVGLPDGQFGNSEVGHMNLGAGRVLYQDSTRISSEVASRDFYKNEALVNAVKAANTLGGNVHIMGLLSDGGVHSNQDHIEAMCHSALVHGAKNVFVHCFLDGRDTPPKSADKYINRLRDHIIKLNAHYESGRVQIASIIGRYYAMDRDNRWDRVQKAYELITEGKADRLSTRADGAVQAAYKARETDEFINPTVVIGRDEVPYTVDDNDALIFMNFRADRARELAQAFVLPDHEFSGFARNKQPKLAAFVMLTKYSDVLADNPKTSIAYYPTSLTNTLGEYLQSKGKTQLRIAETEKYAHVTFFFSGGREDEYKGETRILVPSPDVATYDLQPEMSAPEVTDKLVEAIESGQYDVLVVNYANGDMVGHTGIFDAAVQAVEALDVCVGRVAAAVHAAGGDMLITADHGNCEQMQDYESGQVHTQHTTEHVPLIYVGEKKVQVRSGGKLSDVAPTILALMDIEAPKEMTGENLLVAAE.

A compositionally biased stretch (polar residues) spans 1–25 (MTNTQQQSESIDDNQAQLSKQQNSD). Positions 1–30 (MTNTQQQSESIDDNQAQLSKQQNSDNNKKV) are disordered. 2 residues coordinate Mn(2+): Asp-38 and Ser-88. The Phosphoserine intermediate role is filled by Ser-88. Substrate-binding positions include His-149, 179–180 (RD), Arg-217, Arg-223, 293–296 (RADR), and Lys-373. Mn(2+) is bound by residues Asp-440, His-444, Asp-481, His-482, and His-500.

The protein belongs to the BPG-independent phosphoglycerate mutase family. Monomer. Mn(2+) is required as a cofactor.

The catalysed reaction is (2R)-2-phosphoglycerate = (2R)-3-phosphoglycerate. Its pathway is carbohydrate degradation; glycolysis; pyruvate from D-glyceraldehyde 3-phosphate: step 3/5. Functionally, catalyzes the interconversion of 2-phosphoglycerate and 3-phosphoglycerate. The polypeptide is 2,3-bisphosphoglycerate-independent phosphoglycerate mutase (Psychrobacter arcticus (strain DSM 17307 / VKM B-2377 / 273-4)).